Here is a 475-residue protein sequence, read N- to C-terminus: Bifunctional purple acid phosphatase 26 (475 aa).

A signal peptide spans 1-30 (MNHLVIISVFLSSVLLLYRGESGITSSFIR). N103 is a glycosylation site (N-linked (GlcNAc...) asparagine). Fe cation contacts are provided by D162, D189, and Y192. D189 contacts Zn(2+). 2 residues coordinate Zn(2+): N227 and H312. N227 lines the substrate pocket. The active-site Proton donor is H322. H349 lines the Zn(2+) pocket. 349-351 (HVH) contributes to the substrate binding site. H351 serves as a coordination point for Fe cation. N-linked (GlcNAc...) asparagine glycosylation is found at N365 and N422.

The protein belongs to the metallophosphoesterase superfamily. Purple acid phosphatase family. In terms of assembly, homodimer. Fe cation is required as a cofactor. It depends on Zn(2+) as a cofactor. Post-translationally, glycosylated. As to expression, expressed in roots, stems, leaves, flowers and siliques.

The protein localises to the vacuole. The enzyme catalyses a phosphate monoester + H2O = an alcohol + phosphate. It catalyses the reaction 2 a phenolic donor + H2O2 = 2 a phenolic radical donor + 2 H2O. With respect to regulation, activated by Mg(2+), Co(2+), Mn(2+) and Ba(2+). Inhibited by Fe(2+), Cu(2+), Zn(2+), NaF, molybdate, arsenate, vanadate and inorganic phosphate. No effect of tartrate, Asp, Gln, glutathione, Asn, ascorbic acid and phosphite. Its function is as follows. Metallo-phosphoesterase involved in phosphate metabolism. Acid phosphatase activity with phosphoenolpyruvate, inorganic pyrophosphate, phenyl-phosphate and p-nitrophenyl-phosphate as the most effective substrates. No activity with phytic acid, phosphocholine or bis-p-nitrophenyl-phosphate. Has a peroxidase activity at alkaline pH. This chain is Bifunctional purple acid phosphatase 26 (PAP26), found in Arabidopsis thaliana (Mouse-ear cress).